Consider the following 394-residue polypeptide: Chalcone synthase 2 (394 aa).

Residue C167 is part of the active site.

This sequence belongs to the thiolase-like superfamily. Chalcone/stilbene synthases family.

The enzyme catalyses (E)-4-coumaroyl-CoA + 3 malonyl-CoA + 3 H(+) = 2',4,4',6'-tetrahydroxychalcone + 3 CO2 + 4 CoA. Its pathway is secondary metabolite biosynthesis; flavonoid biosynthesis. Functionally, the primary product of this enzyme is 4,2',4',6'-tetrahydroxychalcone (also termed naringenin-chalcone or chalcone) which can under specific conditions spontaneously isomerize into naringenin. The polypeptide is Chalcone synthase 2 (CHS2) (Secale cereale (Rye)).